Consider the following 233-residue polypeptide: Ribitol-5-phosphate cytidylyltransferase (233 aa).

CTP is bound by residues Leu-7–Gly-10 and Gly-80–Thr-86.

The protein belongs to the IspD/TarI cytidylyltransferase family. TarI subfamily.

It carries out the reaction D-ribitol 5-phosphate + CTP + H(+) = CDP-L-ribitol + diphosphate. The protein operates within cell wall biogenesis; poly(ribitol phosphate) teichoic acid biosynthesis. Its function is as follows. Catalyzes the transfer of the cytidylyl group of CTP to D-ribitol 5-phosphate. The protein is Ribitol-5-phosphate cytidylyltransferase of Lactiplantibacillus plantarum (strain ATCC BAA-793 / NCIMB 8826 / WCFS1) (Lactobacillus plantarum).